Here is a 414-residue protein sequence, read N- to C-terminus: Histidine--tRNA ligase (414 aa).

It belongs to the class-II aminoacyl-tRNA synthetase family. Homodimer.

The protein localises to the cytoplasm. The enzyme catalyses tRNA(His) + L-histidine + ATP = L-histidyl-tRNA(His) + AMP + diphosphate + H(+). This Anaeromyxobacter dehalogenans (strain 2CP-1 / ATCC BAA-258) protein is Histidine--tRNA ligase.